An 84-amino-acid chain; its full sequence is U-actitoxin-Avd8e (84 aa).

Residues 1–22 (MASARTLVLLLIGAVLMCQVSA) form the signal peptide. The propeptide occupies 23 to 41 (DSELLNEILAAHMEEDMPE). In terms of domain architecture, ShKT spans 44 to 84 (CIDRYRSNICGSVIRPLDCTRRKSRMGRFARTNCKKLCGFC). Intrachain disulfides connect cysteine 44-cysteine 84, cysteine 53-cysteine 77, and cysteine 62-cysteine 81.

The protein belongs to the sea anemone 8 toxin family.

The protein localises to the secreted. Its subcellular location is the nematocyst. This Anemonia viridis (Snakelocks anemone) protein is U-actitoxin-Avd8e.